Consider the following 238-residue polypeptide: Pyridoxine 5'-phosphate synthase (238 aa).

N7 provides a ligand contact to 3-amino-2-oxopropyl phosphate. 9 to 10 (DH) is a 1-deoxy-D-xylulose 5-phosphate binding site. R18 lines the 3-amino-2-oxopropyl phosphate pocket. H43 acts as the Proton acceptor in catalysis. Residues R45 and H50 each coordinate 1-deoxy-D-xylulose 5-phosphate. Residue E70 is the Proton acceptor of the active site. Residue T100 participates in 1-deoxy-D-xylulose 5-phosphate binding. The Proton donor role is filled by H190. 3-amino-2-oxopropyl phosphate-binding positions include G191 and 212 to 213 (GH).

This sequence belongs to the PNP synthase family. Homooctamer; tetramer of dimers.

Its subcellular location is the cytoplasm. It catalyses the reaction 3-amino-2-oxopropyl phosphate + 1-deoxy-D-xylulose 5-phosphate = pyridoxine 5'-phosphate + phosphate + 2 H2O + H(+). Its pathway is cofactor biosynthesis; pyridoxine 5'-phosphate biosynthesis; pyridoxine 5'-phosphate from D-erythrose 4-phosphate: step 5/5. Its function is as follows. Catalyzes the complicated ring closure reaction between the two acyclic compounds 1-deoxy-D-xylulose-5-phosphate (DXP) and 3-amino-2-oxopropyl phosphate (1-amino-acetone-3-phosphate or AAP) to form pyridoxine 5'-phosphate (PNP) and inorganic phosphate. The polypeptide is Pyridoxine 5'-phosphate synthase (Prochlorococcus marinus (strain MIT 9215)).